A 252-amino-acid chain; its full sequence is Adenosylcobinamide-GDP ribazoletransferase (252 aa).

5 consecutive transmembrane segments (helical) span residues 33–53 (FISP…VVLL), 105–125 (TGSG…IATL), 132–152 (LWFF…LLGL), 184–204 (FAIL…LLVF), and 215–235 (MSGD…LLVA).

It belongs to the CobS family. Requires Mg(2+) as cofactor.

It localises to the cell membrane. The catalysed reaction is alpha-ribazole + adenosylcob(III)inamide-GDP = adenosylcob(III)alamin + GMP + H(+). It carries out the reaction alpha-ribazole 5'-phosphate + adenosylcob(III)inamide-GDP = adenosylcob(III)alamin 5'-phosphate + GMP + H(+). The protein operates within cofactor biosynthesis; adenosylcobalamin biosynthesis; adenosylcobalamin from cob(II)yrinate a,c-diamide: step 7/7. Joins adenosylcobinamide-GDP and alpha-ribazole to generate adenosylcobalamin (Ado-cobalamin). Also synthesizes adenosylcobalamin 5'-phosphate from adenosylcobinamide-GDP and alpha-ribazole 5'-phosphate. This chain is Adenosylcobinamide-GDP ribazoletransferase, found in Sulfolobus acidocaldarius (strain ATCC 33909 / DSM 639 / JCM 8929 / NBRC 15157 / NCIMB 11770).